Reading from the N-terminus, the 394-residue chain is Elongation factor Tu 2 (394 aa).

The region spanning 10–204 (KPHVNVGTIG…ALDSYIPEPE (195 aa)) is the tr-type G domain. Positions 19–26 (GHVDHGKT) are G1. 19–26 (GHVDHGKT) lines the GTP pocket. Thr-26 lines the Mg(2+) pocket. The segment at 60–64 (GITIN) is G2. The segment at 81-84 (DCPG) is G3. GTP-binding positions include 81 to 85 (DCPGH) and 136 to 139 (NKCD). A G4 region spans residues 136–139 (NKCD). The interval 174 to 176 (SAL) is G5.

This sequence belongs to the TRAFAC class translation factor GTPase superfamily. Classic translation factor GTPase family. EF-Tu/EF-1A subfamily. Monomer.

Its subcellular location is the cytoplasm. The catalysed reaction is GTP + H2O = GDP + phosphate + H(+). Its function is as follows. GTP hydrolase that promotes the GTP-dependent binding of aminoacyl-tRNA to the A-site of ribosomes during protein biosynthesis. This chain is Elongation factor Tu 2, found in Shewanella loihica (strain ATCC BAA-1088 / PV-4).